Consider the following 88-residue polypeptide: Small ribosomal subunit protein uS17 (88 aa).

This sequence belongs to the universal ribosomal protein uS17 family. In terms of assembly, part of the 30S ribosomal subunit.

One of the primary rRNA binding proteins, it binds specifically to the 5'-end of 16S ribosomal RNA. The sequence is that of Small ribosomal subunit protein uS17 from Nitrosospira multiformis (strain ATCC 25196 / NCIMB 11849 / C 71).